The sequence spans 174 residues: Dual-action ribosomal maturation protein DarP (174 aa).

The protein belongs to the DarP family.

It is found in the cytoplasm. Functionally, member of a network of 50S ribosomal subunit biogenesis factors which assembles along the 30S-50S interface, preventing incorrect 23S rRNA structures from forming. Promotes peptidyl transferase center (PTC) maturation. The chain is Dual-action ribosomal maturation protein DarP from Pseudomonas aeruginosa (strain LESB58).